We begin with the raw amino-acid sequence, 79 residues long: Acyl carrier protein (79 aa).

Residues 2–77 (SDIEARVKKI…NAIDYANTHQ (76 aa)) form the Carrier domain. The residue at position 37 (Ser-37) is an O-(pantetheine 4'-phosphoryl)serine.

This sequence belongs to the acyl carrier protein (ACP) family. In terms of processing, 4'-phosphopantetheine is transferred from CoA to a specific serine of apo-ACP by AcpS. This modification is essential for activity because fatty acids are bound in thioester linkage to the sulfhydryl of the prosthetic group.

The protein resides in the cytoplasm. Its pathway is lipid metabolism; fatty acid biosynthesis. In terms of biological role, carrier of the growing fatty acid chain in fatty acid biosynthesis. The sequence is that of Acyl carrier protein from Paracidovorax citrulli (strain AAC00-1) (Acidovorax citrulli).